Reading from the N-terminus, the 412-residue chain is Gamma-glutamyl phosphate reductase (412 aa).

It belongs to the gamma-glutamyl phosphate reductase family.

It localises to the cytoplasm. It carries out the reaction L-glutamate 5-semialdehyde + phosphate + NADP(+) = L-glutamyl 5-phosphate + NADPH + H(+). Its pathway is amino-acid biosynthesis; L-proline biosynthesis; L-glutamate 5-semialdehyde from L-glutamate: step 2/2. Catalyzes the NADPH-dependent reduction of L-glutamate 5-phosphate into L-glutamate 5-semialdehyde and phosphate. The product spontaneously undergoes cyclization to form 1-pyrroline-5-carboxylate. The sequence is that of Gamma-glutamyl phosphate reductase from Actinobacillus pleuropneumoniae serotype 3 (strain JL03).